We begin with the raw amino-acid sequence, 467 residues long: Retinoic acid receptor RXR-alpha (467 aa).

A disordered region spans residues 1 to 112 (MDTKHFLPLD…MNPVSSTEDI (112 aa)). The interval 1–139 (MDTKHFLPLD…GNMASFTKHI (139 aa)) is modulating domain. Lysine 4 participates in a covalent cross-link: Glycyl lysine isopeptide (Lys-Gly) (interchain with G-Cter in SUMO2). Positions 11 to 25 (FSTQVNSSSLNSPTG) are enriched in polar residues. Phosphoserine is present on residues serine 22 and serine 28. Over residues 32–52 (PSLHPSLGPGIGSPLGSPGQL) the composition is skewed to low complexity. Residues 54–63 (SPISTLSSPI) show a composition bias toward polar residues. Serine 61 and serine 75 each carry phosphoserine; by MAPK8 and MAPK9. Residues 83–109 (SVPTTPTLGFGTGSPQLNSPMNPVSST) are compositionally biased toward polar residues. Residue threonine 87 is modified to Phosphothreonine; by MAPK8 and MAPK9. Lysine 113 participates in a covalent cross-link: Glycyl lysine isopeptide (Lys-Gly) (interchain with G-Cter in SUMO). Serine 134 carries the post-translational modification Phosphoserine. Cysteine 140 and cysteine 143 together coordinate Zn(2+). Residues 140–160 (CAICGDRSSGKHYGVYSCEGC) form an NR C4-type zinc finger. The nuclear receptor DNA-binding region spans 140–205 (CAICGDRSSG…RYQKCLAMGM (66 aa)). At lysine 150 the chain carries N6-acetyllysine. Zn(2+) is bound by residues cysteine 157 and cysteine 160. A nuclear localization signal region spans residues 165–170 (KRTVRK). Zn(2+) is bound by residues cysteine 176, cysteine 182, cysteine 192, and cysteine 195. The segment at 176–200 (CRDNKDCLIDKRQRNRCQYCRYQKC) adopts an NR C4-type zinc-finger fold. The segment at 206–229 (KREAVQEERQRGKDRNENEVESTS) is hinge. Positions 211 to 223 (QEERQRGKDRNEN) are enriched in basic and acidic residues. The disordered stretch occupies residues 211 to 233 (QEERQRGKDRNENEVESTSSANE). Residues 232–463 (NEDMPVEKIL…TFLMEMLEAP (232 aa)) form the NR LBD domain. Residue serine 264 is modified to Phosphoserine. Position 265 is a phosphoserine; by MAPK8 and MAPK9 (serine 265). 9-cis-retinoate contacts are provided by arginine 321 and alanine 332. All-trans-retinoate is bound by residues arginine 321 and alanine 332. Residues 353-373 (RVLTELVSKMRDMQMDKTELG) form a required for nuclear export region.

The protein belongs to the nuclear hormone receptor family. NR2 subfamily. In terms of assembly, homodimer. Heterodimer with RARA; required for ligand-dependent retinoic acid receptor transcriptional activity. Heterodimer with PPARA (via the leucine-like zipper in the LBD); the interaction is required for PPARA transcriptional activity. Heterodimerizes with PPARG. Heterodimerizes (via NR LBD) with RARB. Heterodimerizes with NR1H4; the heterodimerization enhances the binding affinity for LXXLL motifs from coactivators. Interacts with coactivator NCO6. Interacts with coactivator NCO3. Interacts with coactivator FAM120B. Interacts with coactivator PELP1, SENP6, SFPQ, DNTTIP2 and RNF8. Interacts with PRMT2. Interacts with ASXL1. Interacts with BHLHE40/DEC1, BHLHE41/DEC2, NCOR1 and NCOR2. Interacts in a ligand-dependent fashion with MED1 and NCOA1. Interacts with VDR. Interacts with EP300; the interaction is decreased by 9-cis retinoic acid. Heterodimer (via C-terminus) with NR4A1 (via DNA-binding domain); the interaction is enhanced by 9-cis retinoic acid. NR4A1 competes with EP300 for interaction with RXRA and thereby attenuates EP300 mediated acetylation of RXRA. In the absence of hormonal ligand, interacts with TACC1. Interacts ith IGFBP3. In terms of processing, acetylated by EP300; acetylation enhances DNA binding and transcriptional activity. Post-translationally, phosphorylated on serine and threonine residues mainly in the N-terminal modulating domain. Constitutively phosphorylated on Ser-22 in the presence or absence of ligand. Under stress conditions, hyperphosphorylated by activated JNK on Ser-61, Ser-75, Thr-87 and Ser-265. Phosphorylated on Ser-28, in vitro, by PKA. This phosphorylation is required for repression of cAMP-mediated transcriptional activity of RARA. Ubiquitinated by UBR5, leading to its degradation: UBR5 specifically recognizes and binds ligand-bound RXRA when it is not associated with coactivators (NCOAs). In presence of NCOAs, the UBR5-degron is not accessible, preventing its ubiquitination and degradation. In terms of processing, sumoylation negatively regulates transcriptional activity. Desumoylated specifically by SENP6. As to expression, expressed in macrophages (at protein level).

Its subcellular location is the nucleus. It is found in the cytoplasm. The protein localises to the mitochondrion. In terms of biological role, receptor for retinoic acid that acts as a transcription factor. Forms homo- or heterodimers with retinoic acid receptors (RARs) and binds to target response elements in response to their ligands, all-trans or 9-cis retinoic acid, to regulate gene expression in various biological processes. The RAR/RXR heterodimers bind to the retinoic acid response elements (RARE) composed of tandem 5'-AGGTCA-3' sites known as DR1-DR5 to regulate transcription. The high affinity ligand for retinoid X receptors (RXRs) is 9-cis retinoic acid. In the absence of ligand, the RXR-RAR heterodimers associate with a multiprotein complex containing transcription corepressors that induce histone deacetylation, chromatin condensation and transcriptional suppression. On ligand binding, the corepressors dissociate from the receptors and coactivators are recruited leading to transcriptional activation. Serves as a common heterodimeric partner for a number of nuclear receptors, such as RARA, RARB and PPARA. The RXRA/RARB heterodimer can act as a transcriptional repressor or transcriptional activator, depending on the RARE DNA element context. The RXRA/PPARA heterodimer is required for PPARA transcriptional activity on fatty acid oxidation genes such as ACOX1 and the P450 system genes. Together with RARA, positively regulates microRNA-10a expression, thereby inhibiting the GATA6/VCAM1 signaling response to pulsatile shear stress in vascular endothelial cells. Acts as an enhancer of RARA binding to RARE DNA element. May facilitate the nuclear import of heterodimerization partners such as VDR and NR4A1. Promotes myelin debris phagocytosis and remyelination by macrophages. Plays a role in the attenuation of the innate immune system in response to viral infections, possibly by negatively regulating the transcription of antiviral genes such as type I IFN genes. Involved in the regulation of calcium signaling by repressing ITPR2 gene expression, thereby controlling cellular senescence. The polypeptide is Retinoic acid receptor RXR-alpha (Rxra) (Mus musculus (Mouse)).